Here is a 161-residue protein sequence, read N- to C-terminus: Ribonuclease H (161 aa).

The 142-residue stretch at Val3–Glu144 folds into the RNase H type-1 domain. Asp12, Glu50, Asp72, and Asp136 together coordinate Mg(2+).

The protein belongs to the RNase H family. As to quaternary structure, monomer. Requires Mg(2+) as cofactor.

The protein resides in the cytoplasm. It catalyses the reaction Endonucleolytic cleavage to 5'-phosphomonoester.. In terms of biological role, endonuclease that specifically degrades the RNA of RNA-DNA hybrids. The sequence is that of Ribonuclease H from Shewanella woodyi (strain ATCC 51908 / MS32).